The sequence spans 1015 residues: MGAERRLLSIKEAFRLAQQPHQNQAKLVVALSRTYRTMDDKTVFHEEFIHYLKYVMVVYKREPAVERVIEFAAKFVTSFHQSDMEDDEEEEDGGLLNYLFTFLLKSHEANSNAVRFRVCLLINKLLGSMPENAQIDDDVFDKINKAMLIRLKDKIPNVRIQAVLALSRLQDPKDDECPVVNAYATLIENDSNPEVRRAVLSCIAPSAKTLPKIVGRTKDVKEAVRKLAYQVLAEKVHMRAMSIAQRVMLLQQGLNDRSDAVKQAMQKHLLQGWLRFSEGNILELLHRLDVENSSEVAVSVLNALFSITPLSELVGLCKNNDGRKLIPVETLTPEIALYWCALCEYLKSKGDEGEEFLEQILPEPVVYADYLLSYIQSIPVVNEEHRGDFSYIGNLMTKEFIGQQLILIIKSLDTSEEGGRKKLLAVLQEILILPTIPISLVSFLVERLLHIIIDDNKRTQIVTEIISEIRAPIVTVGVNNDPADVRKKELKMAEIKVKLIEAKEALENCITLQDFNRASELKEEIKALEDARINLLKETEQLEIKEVHIEKNDAETLQKCLILCYELLKQMSISTGLSATMNGIIESLILPGIISIHPVVRNLAVLCLGCCGLQNQDFARKHFVLLLQVLQIDDVTIKISALKAIFDQLMTFGIEPFKTKKIKTLHCEGTEINSDDEQESKEVEETATAKNVLKLLSDFLDSEVSELRTGAAEGLAKLMFSGLLVSSRILSRLILLWYNPVTEEDVQLRHCLGVFFPVFAYASRTNQECFEEAFLPTLQTLANAPASSPLAEIDITNVAELLVDLTRPSGLNPQAKTSQDYQALTVHDNLAMKICNEILTSPCSPEIRVYTKALSSLELSSHLAKDLLVLLNEILEQVKDRTCLRALEKIKIQLEKGNKEFGDQAEAAQDATLTTTTFQNEDEKNKEVYMTPLRGVKATQASKSTQLKTNRGQRKVTVSARTNRRCQTAEADSESDHEVPEPESEMKMRLPRRAKTAALEKSKLNLAQFLNEDLS.

HEAT repeat units lie at residues 94–131, 138–173, 174–212, 238–275, and 276–313; these read GLLN…SMPE, DVFD…QDPK, DDEC…TLPK, MRAM…GWLR, and FSEG…LSEL. S390 is subject to Phosphoserine. 3 HEAT repeats span residues 399–436, 439–478, and 617–654; these read EFIG…LPTI, SLVS…TVGV, and DFAR…TFGI. S674 is subject to Phosphoserine. HEAT repeat units lie at residues 687-724 and 865-907; these read ATAK…SGLL and KDLL…QAEA. T931 bears the Phosphothreonine mark. Polar residues predominate over residues 941-950; it reads ASKSTQLKTN. Residues 941 to 994 form a disordered region; sequence ASKSTQLKTNRGQRKVTVSARTNRRCQTAEADSESDHEVPEPESEMKMRLPRRA. S973, S975, S1002, and S1015 each carry phosphoserine. Over residues 974–988 the composition is skewed to basic and acidic residues; that stretch reads ESDHEVPEPESEMKM.

Belongs to the CND3 (condensin subunit 3) family. Component of the condensin complex, which contains the SMC2 and SMC4 heterodimer, and three non SMC subunits that probably regulate the complex: NCAPH/BRRN1, NCAPD2/CAPD2 and NCAPG. In terms of processing, phosphorylated by CDK1. Its phosphorylation, as well as that of NCAPD2 and NCAPH subunits, activates the condensin complex and is required for chromosome condensation. In terms of tissue distribution, highly expressed in testis.

It localises to the nucleus. The protein resides in the cytoplasm. It is found in the chromosome. Regulatory subunit of the condensin complex, a complex required for conversion of interphase chromatin into mitotic-like condense chromosomes. The condensin complex probably introduces positive supercoils into relaxed DNA in the presence of type I topoisomerases and converts nicked DNA into positive knotted forms in the presence of type II topoisomerases. This Homo sapiens (Human) protein is Condensin complex subunit 3 (NCAPG).